A 261-amino-acid polypeptide reads, in one-letter code: Precorrin-6A synthase [deacetylating] (261 aa).

It carries out the reaction precorrin-5 + S-adenosyl-L-methionine + H2O = precorrin-6A + acetate + S-adenosyl-L-homocysteine + 2 H(+). The protein operates within cofactor biosynthesis; adenosylcobalamin biosynthesis; cob(II)yrinate a,c-diamide from precorrin-2 (aerobic route): step 5/10. Its function is as follows. Catalyzes the methylation of C-1 in precorrin-5 and the subsequent extrusion of acetic acid from the resulting intermediate to form cobalt-precorrin-6A. This is Precorrin-6A synthase [deacetylating] (cobF) from Sinorhizobium sp.